A 175-amino-acid polypeptide reads, in one-letter code: ATP synthase subunit d, mitochondrial (175 aa).

N-acetylserine is present on S2.

In terms of assembly, F-type ATP synthases have 2 components, the catalytic core F(1) and the membrane-embedded component F(0), linked together by a central stalk and a peripheral stalk. The central stalk, also called rotor shaft, is often seen as part of F(1). The peripheral stalk is seen as part of F(0). F(0) contains the membrane channel next to the rotor. F-type ATP synthases form dimers but each monomer functions independently in ATP generation. The dimer consists of 18 different polypeptides: ATP1 (subunit alpha, part of F(1), 3 molecules per monomer), ATP2 (subunit beta, part of F(1), 3 molecules per monomer), ATP3 (subunit gamma, part of the central stalk), ATP4 (subunit b, part of the peripheral stalk), ATP5/OSCP (subunit 5/OSCP, part of the peripheral stalk), ATP6 (subunit a, part of the peripheral stalk), ATP7 (subunit d, part of the peripheral stalk), ATP8 (subunit 8, part of the peripheral stalk), OLI1 (subunit c, part of the rotor, 10 molecules per monomer), ATP14 (subunit h, part of the peripheral stalk), ATP15 (subunit epsilon, part of the central stalk), ATP16 (subunit delta, part of the central stalk), ATP17 (subunit f, part of the peripheral stalk), ATP18 (subunit i/j, part of the peripheral stalk). Dimer-specific subunits are ATP19 (subunit k, at interface between monomers), ATP20 (subunit g, at interface between monomers), TIM11 (subunit e, at interface between monomers). Also contains subunit L.

It is found in the mitochondrion inner membrane. Mitochondrial membrane ATP synthase (F(1)F(0) ATP synthase or Complex V) produces ATP from ADP in the presence of a proton gradient across the membrane which is generated by electron transport complexes of the respiratory chain. F-type ATP synthases consist of two structural domains, F(1) - containing the extramembraneous catalytic core, and F(0) - containing the membrane proton channel, linked together by a central stalk and a peripheral stalk. During catalysis, ATP synthesis in the catalytic domain of F(1) is coupled via a rotary mechanism of the central stalk subunits to proton translocation. Part of the complex F(0) domain and the peripheral stalk, which acts as a stator to hold the catalytic alpha/ATP1(3)beta/ATP2(3) subcomplex and subunit a/ATP6 static relative to the rotary elements. This is ATP synthase subunit d, mitochondrial from Pichia angusta (Yeast).